Consider the following 432-residue polypeptide: UPF0597 protein APL_1605 (432 aa).

The protein belongs to the UPF0597 family.

The polypeptide is UPF0597 protein APL_1605 (Actinobacillus pleuropneumoniae serotype 5b (strain L20)).